The chain runs to 91 residues: MMKRRNSFNNSYVSVNNRTGFRRSKVCPLAASKDEDIDYKNIDLLSKFTSDYGRILPRRLTGVCAKKQRKLRLAIIRARFLALIPYCTKKV.

It belongs to the bacterial ribosomal protein bS18 family. Part of the 30S ribosomal subunit. Forms a tight heterodimer with protein bS6.

Functionally, binds as a heterodimer with protein bS6 to the central domain of the 16S rRNA, where it helps stabilize the platform of the 30S subunit. The sequence is that of Small ribosomal subunit protein bS18 from Wolbachia pipientis wMel.